The sequence spans 122 residues: UPF0102 protein Cgl2031/cg2228 (122 aa).

It belongs to the UPF0102 family.

In Corynebacterium glutamicum (strain ATCC 13032 / DSM 20300 / JCM 1318 / BCRC 11384 / CCUG 27702 / LMG 3730 / NBRC 12168 / NCIMB 10025 / NRRL B-2784 / 534), this protein is UPF0102 protein Cgl2031/cg2228.